Here is a 173-residue protein sequence, read N- to C-terminus: MEIVDLKKWIRDIPDFPEKGVIFRDITPLLKNPEVFKYSVEKIAELIKEWDFDCIVSPESRGFIFATPLAYLMNKEFVPIRKPGKLPYKTYSISYELEYGQTSLEMHVDAIDKGEKVIVVDDVLATGGTTKAIKELVDRAGGKTVGVVCLAELTYLNPRENLKDLEIASLIRY.

It belongs to the purine/pyrimidine phosphoribosyltransferase family. In terms of assembly, homodimer.

Its subcellular location is the cytoplasm. It carries out the reaction AMP + diphosphate = 5-phospho-alpha-D-ribose 1-diphosphate + adenine. It participates in purine metabolism; AMP biosynthesis via salvage pathway; AMP from adenine: step 1/1. Functionally, catalyzes a salvage reaction resulting in the formation of AMP, that is energically less costly than de novo synthesis. This Petrotoga mobilis (strain DSM 10674 / SJ95) protein is Adenine phosphoribosyltransferase.